The following is an 815-amino-acid chain: Bifunctional purine biosynthetic protein purD (815 aa).

The GARS stretch occupies residues 6–452; the sequence is NILVIGSGSR…YRKDIGQKAL (447 aa). The ATP-grasp domain maps to 113–343; sequence KDFMARNNIP…LFEIVLACIE (231 aa). 139–200 serves as a coordination point for ATP; that stretch reads IESLNYKIVL…EEFLDGEECS (62 aa). Mg(2+) contacts are provided by glutamate 313 and asparagine 315. Positions 469–801 are AIRS; it reads VSYSESGVDI…KVYKIGKIIN (333 aa).

The protein in the N-terminal section; belongs to the GARS family. It in the C-terminal section; belongs to the AIR synthase family. The cofactor is Mg(2+). Mn(2+) is required as a cofactor.

The protein localises to the cytoplasm. It is found in the cytosol. The enzyme catalyses 5-phospho-beta-D-ribosylamine + glycine + ATP = N(1)-(5-phospho-beta-D-ribosyl)glycinamide + ADP + phosphate + H(+). It carries out the reaction 2-formamido-N(1)-(5-O-phospho-beta-D-ribosyl)acetamidine + ATP = 5-amino-1-(5-phospho-beta-D-ribosyl)imidazole + ADP + phosphate + H(+). The protein operates within purine metabolism; IMP biosynthesis via de novo pathway; 5-amino-1-(5-phospho-D-ribosyl)imidazole from N(2)-formyl-N(1)-(5-phospho-D-ribosyl)glycinamide: step 2/2. It functions in the pathway purine metabolism; IMP biosynthesis via de novo pathway; N(1)-(5-phospho-D-ribosyl)glycinamide from 5-phospho-alpha-D-ribose 1-diphosphate: step 2/2. Its function is as follows. Catalyzes the second and fifth step in the 'de novo' purine biosynthesis pathway; contains phosphoribosylamine--glycine ligase (GARS) and phosphoribosylformylglycinamidine cyclo-ligase (AIRS) activities. This chain is Bifunctional purine biosynthetic protein purD (purD), found in Dictyostelium discoideum (Social amoeba).